We begin with the raw amino-acid sequence, 250 residues long: MSKEKQAQSKAHKAQQAISSAKSLSTQKSKMSELERATRDGAAIGKKRADIAKKIADKAKQLSSYQAKQFKADEQAVKKVAQEQKRLSDERTKHEAFIKQSLSSMRTTASATMEAEEEYDFFISHASEDKEAFVQDLAAALRDLGAKIFYDAYTLKVGDSLRRKIDQGLANSKFGIVVLSEHFFSKQWPARELDGLTAMEIGGQTRILPIWHKVSYDEVRRFSPSLADKVALNTSLKSVEEIAKELHSLI.

The interval 1–46 is disordered; the sequence is MSKEKQAQSKAHKAQQAISSAKSLSTQKSKMSELERATRDGAAIGK. The segment covering 14 to 23 has biased composition (low complexity); it reads AQQAISSAKS. The segment covering 30-39 has biased composition (basic and acidic residues); the sequence is KMSELERATR. The TIR domain maps to 117 to 250; the sequence is EEYDFFISHA…EIAKELHSLI (134 aa). The active site involves Glu-192.

Homodimer. Interacts with host TIRAP. Interacts with host TLR4, abolishes the interaction of host TIRAP with TLR4.

The protein localises to the secreted. It localises to the host cell membrane. The catalysed reaction is NAD(+) + H2O = ADP-D-ribose + nicotinamide + H(+). The enzyme catalyses NAD(+) = 2'cADPR + nicotinamide + H(+). Virulence factor that interferes with host Toll-like receptor 2 (TLR2) signaling, resulting in the reduction of dendritic cell maturation, inhibition of pro-inflammatory cytokine secretion and impaired NF-kappa-B activation in macrophages. Also acts on host TLR4. Binds host lipids. Has NAD(+) hydrolase (NADase) activity, catalyzes cleavage of NAD(+) into ADP-D-ribose (ADPR) and nicotinamide, also generates a cyclization variant of cyclic ADPR (cADPR), termed v-cADPR (probably 2'cADPR). The protein is Probable 2' cyclic ADP-D-ribose synthase TcpB of Brucella abortus (strain 2308).